A 357-amino-acid chain; its full sequence is Glutamine synthetase root isozyme 1 (357 aa).

The region spanning 19–99 (IIAEYIWIGG…VMCDCYTPQG (81 aa)) is the GS beta-grasp domain. The 252-residue stretch at 106-357 (KRYSAAKVFS…AETTILWNGN (252 aa)) folds into the GS catalytic domain.

This sequence belongs to the glutamine synthetase family. Homooctamer. In terms of tissue distribution, found mainly in the cortical tissues of seedling roots, and in the root tip.

Its subcellular location is the cytoplasm. The enzyme catalyses L-glutamate + NH4(+) + ATP = L-glutamine + ADP + phosphate + H(+). Its function is as follows. Plays a role in the flow of nitrogen into nitrogenous organic compounds. The protein is Glutamine synthetase root isozyme 1 (GLN6) of Zea mays (Maize).